Reading from the N-terminus, the 541-residue chain is 2-succinyl-5-enolpyruvyl-6-hydroxy-3-cyclohexene-1-carboxylate synthase (541 aa).

The protein belongs to the TPP enzyme family. MenD subfamily. Homodimer. It depends on Mg(2+) as a cofactor. Requires Mn(2+) as cofactor. Thiamine diphosphate is required as a cofactor.

The catalysed reaction is isochorismate + 2-oxoglutarate + H(+) = 5-enolpyruvoyl-6-hydroxy-2-succinyl-cyclohex-3-ene-1-carboxylate + CO2. The protein operates within quinol/quinone metabolism; 1,4-dihydroxy-2-naphthoate biosynthesis; 1,4-dihydroxy-2-naphthoate from chorismate: step 2/7. It functions in the pathway quinol/quinone metabolism; menaquinone biosynthesis. Catalyzes the thiamine diphosphate-dependent decarboxylation of 2-oxoglutarate and the subsequent addition of the resulting succinic semialdehyde-thiamine pyrophosphate anion to isochorismate to yield 2-succinyl-5-enolpyruvyl-6-hydroxy-3-cyclohexene-1-carboxylate (SEPHCHC). The polypeptide is 2-succinyl-5-enolpyruvyl-6-hydroxy-3-cyclohexene-1-carboxylate synthase (Leuconostoc mesenteroides subsp. mesenteroides (strain ATCC 8293 / DSM 20343 / BCRC 11652 / CCM 1803 / JCM 6124 / NCDO 523 / NBRC 100496 / NCIMB 8023 / NCTC 12954 / NRRL B-1118 / 37Y)).